An 803-amino-acid polypeptide reads, in one-letter code: Translation initiation factor IF-2 (803 aa).

The span at 65-75 shows a compositional bias: basic and acidic residues; it reads PDKVEEKKEHT. Residues 65–186 form a disordered region; the sequence is PDKVEEKKEH…PKSRKSKTLK (122 aa). Over residues 175-185 the composition is skewed to basic residues; the sequence is NKPKSRKSKTL. The 169-residue stretch at 300–468 folds into the tr-type G domain; the sequence is IRPPVVTIMG…ILLTADAALE (169 aa). Positions 309–316 are G1; it reads GHVDHGKT. 309–316 is a GTP binding site; sequence GHVDHGKT. The interval 334 to 338 is G2; that stretch reads GITQH. The interval 355 to 358 is G3; the sequence is DTPG. GTP contacts are provided by residues 355 to 359 and 409 to 412; these read DTPGH and NKID. Residues 409–412 form a G4 region; the sequence is NKID. A G5 region spans residues 445 to 447; that stretch reads SAK.

It belongs to the TRAFAC class translation factor GTPase superfamily. Classic translation factor GTPase family. IF-2 subfamily.

Its subcellular location is the cytoplasm. Its function is as follows. One of the essential components for the initiation of protein synthesis. Protects formylmethionyl-tRNA from spontaneous hydrolysis and promotes its binding to the 30S ribosomal subunits. Also involved in the hydrolysis of GTP during the formation of the 70S ribosomal complex. This Tropheryma whipplei (strain TW08/27) (Whipple's bacillus) protein is Translation initiation factor IF-2.